The following is a 431-amino-acid chain: Serine hydroxymethyltransferase 2 (431 aa).

(6S)-5,6,7,8-tetrahydrofolate contacts are provided by residues Leu-131 and 135 to 137 (GHL). At Lys-240 the chain carries N6-(pyridoxal phosphate)lysine.

This sequence belongs to the SHMT family. Homodimer. Pyridoxal 5'-phosphate is required as a cofactor.

The protein resides in the cytoplasm. It carries out the reaction (6R)-5,10-methylene-5,6,7,8-tetrahydrofolate + glycine + H2O = (6S)-5,6,7,8-tetrahydrofolate + L-serine. Its pathway is one-carbon metabolism; tetrahydrofolate interconversion. The protein operates within amino-acid biosynthesis; glycine biosynthesis; glycine from L-serine: step 1/1. In terms of biological role, catalyzes the reversible interconversion of serine and glycine with tetrahydrofolate (THF) serving as the one-carbon carrier. This reaction serves as the major source of one-carbon groups required for the biosynthesis of purines, thymidylate, methionine, and other important biomolecules. Also exhibits THF-independent aldolase activity toward beta-hydroxyamino acids, producing glycine and aldehydes, via a retro-aldol mechanism. This is Serine hydroxymethyltransferase 2 from Vibrio parahaemolyticus serotype O3:K6 (strain RIMD 2210633).